The following is a 299-amino-acid chain: MNYLLFCLFFAFSVAAPVTVTRFVDASPTGYDWRADWVKGFPIDSSCNATQYNQLSTGLQEAQLLAEHARDHTLRFGSKSPFFRKYFGNETASAEVVGHFDNVVGADKSSILFLCDDLDDKCKNDGWAGYWRGSNHSDQTIICDLSFVTRRYLTQLCSSGYTVSKSKTNIFWAGDLLHRFWHLKSIGQLVIEHYADTYEEVLELAQENSTYAVRNSNSLIYYALDVYAYDVTIPGEGCNGDGTSYKKSDFSSFEDSDSGSDSGASSTASSSHQHTDSNPSATTDANSHCHTHADGEVHC.

Positions 1–15 (MNYLLFCLFFAFSVA) are cleaved as a signal peptide. 4 N-linked (GlcNAc...) asparagine glycosylation sites follow: Asn48, Asn89, Asn135, and Asn208. Residues 253-299 (FEDSDSGSDSGASSTASSSHQHTDSNPSATTDANSHCHTHADGEVHC) are disordered. Residues 259–272 (GSDSGASSTASSSH) are compositionally biased toward low complexity. Residues 278–288 (NPSATTDANSH) show a composition bias toward polar residues.

The protein belongs to the ZPS1 family. As to quaternary structure, component of a multiprotein complex of 250 kDa composed of at least HYR1, MP65, and PRA1. Interacts with host Integrin alpha-M/beta-2 heterodimer. Also binds human factor H (CFH), CFHR1, plasminogen (PLG), complement C3, and C4BPA. Interacts with ZRT101. Post-translationally, N- and O-glycosylated. The N- and 0-glycosidically linked carbohydrates represent 18 to 20 percent and 3 to 4 percent, respectively, of the molecular mass of PRA1. 0-linked sugar residues may be involved in the interaction with fibrinogen. Contributes highly to the carbohydrate component of the matrix. Treatment with tunicamycin impairs glycosylation.

The protein resides in the secreted. Functionally, cell surface protein involved in the host-parasite interaction during candidal infection. With MP65, represents a major component of the biofilm matrix. As a surface protein, binds the two human complement regulators CFH and CFHR1, as well as plasminogen PLG, mediates complement evasion and extra-cellular matrix interaction and/or degradation. As a released protein, enhances complement control in direct vicinity of the yeast and thus generates an additional protective layer which controls host complement attack, assisting the fungus in escaping host surveillance. Binds to host fluid-phase C3 and blocks cleavage of C3 to C3a and C3b, leading to inhibition of complement activation and protection from uptake of C.albicans by human macrophages. Also mediates human complement control and complement evasion through binding to C4BPA, another human complement inhibitor, as well as through binding to host integrin alpha-M/beta-2. Binds zinc from its environment and then reassociates with ZRT1 to acquire this essential metal. The sequence is that of pH-regulated antigen PRA1 from Candida albicans (strain SC5314 / ATCC MYA-2876) (Yeast).